The sequence spans 126 residues: Holo-[acyl-carrier-protein] synthase (126 aa).

Residues Asp9 and Glu58 each coordinate Mg(2+).

Belongs to the P-Pant transferase superfamily. AcpS family. It depends on Mg(2+) as a cofactor.

The protein resides in the cytoplasm. It catalyses the reaction apo-[ACP] + CoA = holo-[ACP] + adenosine 3',5'-bisphosphate + H(+). Transfers the 4'-phosphopantetheine moiety from coenzyme A to a Ser of acyl-carrier-protein. The polypeptide is Holo-[acyl-carrier-protein] synthase (Aliivibrio salmonicida (strain LFI1238) (Vibrio salmonicida (strain LFI1238))).